Here is a 222-residue protein sequence, read N- to C-terminus: Pre-mRNA cleavage factor Im 25 kDa subunit 1 (222 aa).

The Nudix hydrolase domain occupies 67 to 194; the sequence is GLRTCVEAVL…KLLAVPLCQL (128 aa). Residues 94 to 96 form an interaction with RNA region; it reads SIF. A Nudix box motif is present at residues 101–122; the sequence is GRLRPGESDIEGLKRKLASKLS.

Belongs to the Nudix hydrolase family. CPSF5 subfamily. In terms of assembly, homodimer. Component of the cleavage factor Im (CFIm) complex. Forms a complex with cleavage and polyadenylation specificity factor (CPSF) subunits FIPS5.

The protein resides in the nucleus. Functionally, component of the cleavage factor Im (CFIm) complex that plays a key role in pre-mRNA 3'-processing. Involved in association with CPSF6 or CPSF7 in pre-MRNA 3'-end poly(A) site cleavage and poly(A) addition. NUDT21/CPSF5 binds to cleavage and polyadenylation RNA substrates. The homodimer mediates simultaneous sequence-specific recognition of two 5'-UGUA-3' elements within the pre-mRNA. Binds to, but does not hydrolyze mono- and di-adenosine nucleotides. May have a role in mRNA export. The protein is Pre-mRNA cleavage factor Im 25 kDa subunit 1 of Arabidopsis thaliana (Mouse-ear cress).